The following is a 112-amino-acid chain: Protein FAM32A (112 aa).

The segment at 23-56 is disordered; the sequence is TKRKKKKKDKDKAKMLEAMGTSKKNEEEKRRCLD. Residues 45–56 are compositionally biased toward basic and acidic residues; it reads KKNEEEKRRCLD.

The protein belongs to the FAM32 family.

It is found in the nucleus. May induce G2 arrest and apoptosis. May also increase cell sensitivity to apoptotic stimuli. In Rattus norvegicus (Rat), this protein is Protein FAM32A (Fam32a).